A 211-amino-acid chain; its full sequence is Dephospho-CoA kinase (211 aa).

The region spanning 3-206 is the DPCK domain; sequence VLGLTGGIGS…PGMKGPDPHA (204 aa). 11 to 16 contacts ATP; the sequence is GSGKSI.

This sequence belongs to the CoaE family.

It localises to the cytoplasm. The enzyme catalyses 3'-dephospho-CoA + ATP = ADP + CoA + H(+). The protein operates within cofactor biosynthesis; coenzyme A biosynthesis; CoA from (R)-pantothenate: step 5/5. Catalyzes the phosphorylation of the 3'-hydroxyl group of dephosphocoenzyme A to form coenzyme A. The chain is Dephospho-CoA kinase from Syntrophotalea carbinolica (strain DSM 2380 / NBRC 103641 / GraBd1) (Pelobacter carbinolicus).